Reading from the N-terminus, the 297-residue chain is MKNNIVIITGITASGKSELCDNLREKYGNISIINCDSKQVYKEIPIITAQPLKQEEFYKLYGYVSAKENYSVGLWLEDLEKEVNHALENAQIPIITGGSGLYISSFIKGLSSMPQISQEVRKNVSELRKNLSKEEFYKLVLSKDSKVQDKICINDSHRLSRALEVITETGKTIFVWQENRQPPLFDNFKIYTILPKREDVYQKINSRFIKMIENGAIDEVKKLLSMNLAPNLPAMKAHGVPEIVKYLKGEITLDEAIQIAQTNTRHYAKRQYTWFKNQFPSSEVIDCANELTALEIF.

An ATP-binding site is contributed by G10 to S17. Residue T12–S17 participates in substrate binding. The tract at residues D36 to Q39 is interaction with substrate tRNA.

It belongs to the IPP transferase family. In terms of assembly, monomer. It depends on Mg(2+) as a cofactor.

It carries out the reaction adenosine(37) in tRNA + dimethylallyl diphosphate = N(6)-dimethylallyladenosine(37) in tRNA + diphosphate. Catalyzes the transfer of a dimethylallyl group onto the adenine at position 37 in tRNAs that read codons beginning with uridine, leading to the formation of N6-(dimethylallyl)adenosine (i(6)A). In Wolbachia pipientis wMel, this protein is tRNA dimethylallyltransferase.